The sequence spans 331 residues: Major ferric iron-binding protein (331 aa).

A signal peptide spans 1–22; that stretch reads MKTSIRYALLAAALTAATPALA. 4 residues coordinate Fe cation: histidine 31, glutamate 79, tyrosine 217, and tyrosine 218.

The protein belongs to the bacterial solute-binding protein 1 family.

Its subcellular location is the periplasm. This protein may be a central component in the iron-acquisition system. The polypeptide is Major ferric iron-binding protein (fbpA) (Neisseria meningitidis serogroup A / serotype 4A (strain DSM 15465 / Z2491)).